The primary structure comprises 127 residues: uncharacterized protein (127 aa).

The N-terminal stretch at 1-23 is a signal peptide; that stretch reads MSKPLKFLLWSSLALLLLQIGSG.

This is an uncharacterized protein from Arabidopsis thaliana (Mouse-ear cress).